A 280-amino-acid polypeptide reads, in one-letter code: 3-methyl-2-oxobutanoate hydroxymethyltransferase (280 aa).

Residues Asp45 and Asp84 each contribute to the Mg(2+) site. Residues 45–46 (DS), Asp84, and Lys114 contribute to the 3-methyl-2-oxobutanoate site. Mg(2+) is bound at residue Glu116. The active-site Proton acceptor is Glu183.

Belongs to the PanB family. In terms of assembly, homodecamer; pentamer of dimers. Mg(2+) is required as a cofactor.

The protein localises to the cytoplasm. The enzyme catalyses 3-methyl-2-oxobutanoate + (6R)-5,10-methylene-5,6,7,8-tetrahydrofolate + H2O = 2-dehydropantoate + (6S)-5,6,7,8-tetrahydrofolate. It participates in cofactor biosynthesis; (R)-pantothenate biosynthesis; (R)-pantoate from 3-methyl-2-oxobutanoate: step 1/2. Its function is as follows. Catalyzes the reversible reaction in which hydroxymethyl group from 5,10-methylenetetrahydrofolate is transferred onto alpha-ketoisovalerate to form ketopantoate. The protein is 3-methyl-2-oxobutanoate hydroxymethyltransferase of Clostridium kluyveri (strain ATCC 8527 / DSM 555 / NBRC 12016 / NCIMB 10680 / K1).